The following is a 281-amino-acid chain: CDAN1-interacting nuclease 1 (281 aa).

A Phosphothreonine modification is found at threonine 114.

The protein localises to the nucleus. Its subcellular location is the cytoplasm. Functionally, plays a role in erythroid cell differentiation. The protein is CDAN1-interacting nuclease 1 of Mus musculus (Mouse).